A 419-amino-acid polypeptide reads, in one-letter code: UDP-N-acetylglucosamine 1-carboxyvinyltransferase (419 aa).

Residue 22–23 (KN) participates in phosphoenolpyruvate binding. Arg-91 serves as a coordination point for UDP-N-acetyl-alpha-D-glucosamine. Cys-115 (proton donor) is an active-site residue. Position 115 is a 2-(S-cysteinyl)pyruvic acid O-phosphothioketal (Cys-115). UDP-N-acetyl-alpha-D-glucosamine-binding positions include 120–124 (RPVDL), 160–163 (KVSV), Asp-305, and Ile-327.

It belongs to the EPSP synthase family. MurA subfamily.

It is found in the cytoplasm. It carries out the reaction phosphoenolpyruvate + UDP-N-acetyl-alpha-D-glucosamine = UDP-N-acetyl-3-O-(1-carboxyvinyl)-alpha-D-glucosamine + phosphate. It functions in the pathway cell wall biogenesis; peptidoglycan biosynthesis. Its function is as follows. Cell wall formation. Adds enolpyruvyl to UDP-N-acetylglucosamine. This is UDP-N-acetylglucosamine 1-carboxyvinyltransferase from Citrobacter koseri (strain ATCC BAA-895 / CDC 4225-83 / SGSC4696).